Consider the following 215-residue polypeptide: Ribonuclease T (215 aa).

The Exonuclease domain occupies 20-194; that stretch reads VVIDVETAGF…YDTLQTAKLF (175 aa). Residues aspartate 23, glutamate 25, histidine 181, and aspartate 186 each coordinate Mg(2+). Histidine 181 (proton donor/acceptor) is an active-site residue.

The protein belongs to the RNase T family. As to quaternary structure, homodimer. Mg(2+) serves as cofactor.

Its function is as follows. Trims short 3' overhangs of a variety of RNA species, leaving a one or two nucleotide 3' overhang. Responsible for the end-turnover of tRNA: specifically removes the terminal AMP residue from uncharged tRNA (tRNA-C-C-A). Also appears to be involved in tRNA biosynthesis. The protein is Ribonuclease T of Yersinia pseudotuberculosis serotype I (strain IP32953).